The chain runs to 171 residues: Tetratricopeptide repeat protein 9C (171 aa).

3 TPR repeats span residues 8 to 41 (AQLY…LRGL), 72 to 107 (TDCY…QPDN), and 108 to 141 (AKAL…QPKD).

Belongs to the TTC9 family.

This Homo sapiens (Human) protein is Tetratricopeptide repeat protein 9C (TTC9C).